The chain runs to 155 residues: Peptide methionine sulfoxide reductase MsrB (155 aa).

Positions 15 to 137 constitute a MsrB domain; that stretch reads REALIATLNA…NSVSLTFIPT (123 aa). 4 residues coordinate Zn(2+): C54, C57, C103, and C106. C126 functions as the Nucleophile in the catalytic mechanism.

This sequence belongs to the MsrB Met sulfoxide reductase family. Zn(2+) is required as a cofactor.

It carries out the reaction L-methionyl-[protein] + [thioredoxin]-disulfide + H2O = L-methionyl-(R)-S-oxide-[protein] + [thioredoxin]-dithiol. This chain is Peptide methionine sulfoxide reductase MsrB, found in Xylella fastidiosa (strain M23).